The following is a 208-amino-acid chain: Small ribosomal subunit protein uS4 (208 aa).

Positions 95–157 constitute an S4 RNA-binding domain; it reads RRIDNIVYRA…DSLKKLVRSN (63 aa).

It belongs to the universal ribosomal protein uS4 family. Part of the 30S ribosomal subunit. Contacts protein S5. The interaction surface between S4 and S5 is involved in control of translational fidelity.

In terms of biological role, one of the primary rRNA binding proteins, it binds directly to 16S rRNA where it nucleates assembly of the body of the 30S subunit. With S5 and S12 plays an important role in translational accuracy. In Borrelia duttonii (strain Ly), this protein is Small ribosomal subunit protein uS4.